Here is a 319-residue protein sequence, read N- to C-terminus: HTH-type transcriptional regulator YidZ (319 aa).

The HTH lysR-type domain maps to 8–65 (LDLNLLLCLQLLMQERSVTKAAKRMNVTPSAVSKSLAKLRAWFDDPLFVNSPLGLSPT). The segment at residues 25–44 (VTKAAKRMNVTPSAVSKSLA) is a DNA-binding region (H-T-H motif).

This sequence belongs to the LysR transcriptional regulatory family.

Functionally, involved in anaerobic NO protection. The polypeptide is HTH-type transcriptional regulator YidZ (Escherichia coli O139:H28 (strain E24377A / ETEC)).